A 160-amino-acid polypeptide reads, in one-letter code: Cytochrome b6-f complex subunit 4 (160 aa).

3 helical membrane-spanning segments follow: residues 36 to 56 (LLYI…GLAI), 95 to 115 (LLGV…PFLE), and 131 to 151 (TVFL…TLPI).

It belongs to the cytochrome b family. PetD subfamily. In terms of assembly, the 4 large subunits of the cytochrome b6-f complex are cytochrome b6, subunit IV (17 kDa polypeptide, petD), cytochrome f and the Rieske protein, while the 4 small subunits are petG, petL, petM and petN. The complex functions as a dimer.

The protein localises to the plastid. Its subcellular location is the chloroplast thylakoid membrane. Functionally, component of the cytochrome b6-f complex, which mediates electron transfer between photosystem II (PSII) and photosystem I (PSI), cyclic electron flow around PSI, and state transitions. In Oenothera elata subsp. hookeri (Hooker's evening primrose), this protein is Cytochrome b6-f complex subunit 4.